A 281-amino-acid chain; its full sequence is Shikimate dehydrogenase (NADP(+)) (281 aa).

Shikimate contacts are provided by residues 19–21 (SFS) and Thr66. Lys70 serves as the catalytic Proton acceptor. Positions 91 and 104 each coordinate shikimate. NADP(+) contacts are provided by residues 127–131 (GAGGA) and Ile223. Tyr225 lines the shikimate pocket. Gly246 is a binding site for NADP(+).

Belongs to the shikimate dehydrogenase family. As to quaternary structure, homodimer.

The enzyme catalyses shikimate + NADP(+) = 3-dehydroshikimate + NADPH + H(+). It functions in the pathway metabolic intermediate biosynthesis; chorismate biosynthesis; chorismate from D-erythrose 4-phosphate and phosphoenolpyruvate: step 4/7. Its function is as follows. Involved in the biosynthesis of the chorismate, which leads to the biosynthesis of aromatic amino acids. Catalyzes the reversible NADPH linked reduction of 3-dehydroshikimate (DHSA) to yield shikimate (SA). The sequence is that of Shikimate dehydrogenase (NADP(+)) from Methanobrevibacter smithii (strain ATCC 35061 / DSM 861 / OCM 144 / PS).